The following is a 429-amino-acid chain: Enolase (429 aa).

Q162 contributes to the (2R)-2-phosphoglycerate binding site. The active-site Proton donor is the E204. Mg(2+) is bound by residues D241, E283, and D310. (2R)-2-phosphoglycerate-binding residues include K335, R364, S365, and K386. K335 serves as the catalytic Proton acceptor.

This sequence belongs to the enolase family. Mg(2+) serves as cofactor.

It is found in the cytoplasm. The protein localises to the secreted. The protein resides in the cell surface. The enzyme catalyses (2R)-2-phosphoglycerate = phosphoenolpyruvate + H2O. It functions in the pathway carbohydrate degradation; glycolysis; pyruvate from D-glyceraldehyde 3-phosphate: step 4/5. In terms of biological role, catalyzes the reversible conversion of 2-phosphoglycerate (2-PG) into phosphoenolpyruvate (PEP). It is essential for the degradation of carbohydrates via glycolysis. The polypeptide is Enolase (Mycolicibacterium vanbaalenii (strain DSM 7251 / JCM 13017 / BCRC 16820 / KCTC 9966 / NRRL B-24157 / PYR-1) (Mycobacterium vanbaalenii)).